Consider the following 239-residue polypeptide: Ribonuclease 3 (239 aa).

An RNase III domain is found at 12-137; the sequence is RAKLEGLIGH…LIAAIYLDGG (126 aa). Glutamate 50 contacts Mg(2+). Residue aspartate 54 is part of the active site. The Mg(2+) site is built by aspartate 123 and glutamate 126. Glutamate 126 is a catalytic residue. The region spanning 162 to 231 is the DRBM domain; that stretch reads DAKTELQEWS…ATKMLEREGI (70 aa).

Belongs to the ribonuclease III family. Homodimer. Requires Mg(2+) as cofactor.

The protein localises to the cytoplasm. It catalyses the reaction Endonucleolytic cleavage to 5'-phosphomonoester.. Digests double-stranded RNA. Involved in the processing of primary rRNA transcript to yield the immediate precursors to the large and small rRNAs (23S and 16S). Processes some mRNAs, and tRNAs when they are encoded in the rRNA operon. Processes pre-crRNA and tracrRNA of type II CRISPR loci if present in the organism. The protein is Ribonuclease 3 of Rhizobium leguminosarum bv. trifolii (strain WSM2304).